We begin with the raw amino-acid sequence, 913 residues long: Proline and serine-rich protein 1 (913 aa).

N-acetylmethionine is present on Met1. Disordered regions lie at residues 233–291 (VPPP…PAVS), 488–507 (ASLS…ATNK), 592–618 (SEPT…TLGL), and 888–913 (DGFP…SGWQ). Residues 251 to 275 (LSSQSKPTQSQTFSTPASQLFSPHG) show a composition bias toward polar residues. The segment covering 276-291 (SSNPSTPAATPVPAVS) has biased composition (low complexity). A compositionally biased stretch (polar residues) spans 488 to 506 (ASLSSLPNRNSDSPASATN). Polar residues predominate over residues 893-913 (YPSTPGTPFSLQTGLSQSGWQ).

Interacts with TET2 and OGT; this interaction mediates TET2 O-GlcNAcylation and stability by promoting the interaction between OGT and TET2. Interacts with KDM6A. Interacts with TET1. In terms of processing, glycosylated. Interaction with OGT leads to GlcNAcylation.

Functionally, mediates OGT interaction with and O-GlcNAcylation of TET2 to control TET2 stabilization at enhancers and CpG islands (CGIs). The sequence is that of Proline and serine-rich protein 1 from Mus musculus (Mouse).